Here is a 419-residue protein sequence, read N- to C-terminus: UDP-N-acetylglucosamine 1-carboxyvinyltransferase (419 aa).

Residue 22–23 participates in phosphoenolpyruvate binding; that stretch reads KN. R95 is a binding site for UDP-N-acetyl-alpha-D-glucosamine. Catalysis depends on C119, which acts as the Proton donor. 2-(S-cysteinyl)pyruvic acid O-phosphothioketal is present on C119. UDP-N-acetyl-alpha-D-glucosamine-binding residues include D308 and I330.

It belongs to the EPSP synthase family. MurA subfamily.

The protein localises to the cytoplasm. The enzyme catalyses phosphoenolpyruvate + UDP-N-acetyl-alpha-D-glucosamine = UDP-N-acetyl-3-O-(1-carboxyvinyl)-alpha-D-glucosamine + phosphate. It functions in the pathway cell wall biogenesis; peptidoglycan biosynthesis. Cell wall formation. Adds enolpyruvyl to UDP-N-acetylglucosamine. This chain is UDP-N-acetylglucosamine 1-carboxyvinyltransferase, found in Rickettsia bellii (strain OSU 85-389).